Here is a 195-residue protein sequence, read N- to C-terminus: Putative NADH dehydrogenase/NAD(P)H nitroreductase RSc1004 (195 aa).

This sequence belongs to the nitroreductase family. HadB/RutE subfamily. The cofactor is FMN.

In Ralstonia nicotianae (strain ATCC BAA-1114 / GMI1000) (Ralstonia solanacearum), this protein is Putative NADH dehydrogenase/NAD(P)H nitroreductase RSc1004.